A 132-amino-acid chain; its full sequence is Small ribosomal subunit protein uS9 (132 aa).

The protein belongs to the universal ribosomal protein uS9 family.

This is Small ribosomal subunit protein uS9 from Leptospira borgpetersenii serovar Hardjo-bovis (strain JB197).